A 90-amino-acid polypeptide reads, in one-letter code: MARTVFCEYLKQESEGLDFQLYPGELGKRIFDSISKQAWREWMKKQTMLVNEKKLNMMNADHRQLLEQEMVNFLFEGKDVHIEGYVPPTE.

The protein belongs to the Fe(2+)-trafficking protein family.

Could be a mediator in iron transactions between iron acquisition and iron-requiring processes, such as synthesis and/or repair of Fe-S clusters in biosynthetic enzymes. The protein is Probable Fe(2+)-trafficking protein of Pasteurella multocida (strain Pm70).